The sequence spans 299 residues: Non-structural protein NS-S (299 aa).

Positions 66-69 (PNNP) are involved in inclusion bodies formation. The tract at residues 148–220 (FEGDMVIDSC…KPLLDSLYFA (73 aa)) is interaction with host TNIP2.

This sequence belongs to the Bandavirus NS-S protein family. In terms of assembly, interacts with host TBK1; this interaction antagonizes TBK1 phosphorylation and inhibits TBK1-IRF3 interaction. Interacts with host STAT2; this interaction blocks the nuclear translocation and activation of host STAT2. Interacts with host TNIP2.

It is found in the host cytoplasm. In terms of biological role, plays a role in the inhibition of host RLR-induced interferon-beta activation by inhibiting the phosphorylation of TANK-binding kinase 1/TBK1, thereby blocking IRF3 activation and preventing the establishment of an antiviral state. Also blocks IFN-triggered nuclear translocation and activation of host STAT2. This is Non-structural protein NS-S (NSS) from Alces americanus (American moose).